A 107-amino-acid polypeptide reads, in one-letter code: U1-lycotoxin-Ls1i (107 aa).

The signal sequence occupies residues 1-20; sequence MMKVLVVVALLVTLISYSSS. The propeptide occupies 21-41; sequence EGIDDLEADELLSLMANEQTR. Disulfide bonds link Cys-44–Cys-59, Cys-51–Cys-68, Cys-58–Cys-86, and Cys-70–Cys-84.

The protein belongs to the neurotoxin 19 (CSTX) family. 04 (U1-Lctx) subfamily. In terms of tissue distribution, expressed by the venom gland.

It localises to the secreted. The protein is U1-lycotoxin-Ls1i of Lycosa singoriensis (Wolf spider).